The primary structure comprises 158 residues: Ribonuclease HI (158 aa).

Positions 3 to 144 constitute an RNase H type-1 domain; that stretch reads ELKLIHIFTD…CDQLARAAAE (142 aa). Residues aspartate 12, glutamate 50, aspartate 72, and aspartate 136 each contribute to the Mg(2+) site.

This sequence belongs to the RNase H family. As to quaternary structure, monomer. It depends on Mg(2+) as a cofactor.

It localises to the cytoplasm. The enzyme catalyses Endonucleolytic cleavage to 5'-phosphomonoester.. Its function is as follows. Endonuclease that specifically degrades the RNA of RNA-DNA hybrids. The chain is Ribonuclease HI from Shewanella oneidensis (strain ATCC 700550 / JCM 31522 / CIP 106686 / LMG 19005 / NCIMB 14063 / MR-1).